The primary structure comprises 298 residues: Cyclin-C (298 aa).

The region spanning 46-162 is the Cyclin N-terminal domain; sequence NFITAVATEC…ILDCCLVVHH (117 aa). The interval 278 to 298 is disordered; it reads KLPKPNTPIPPPQQQQSSYHM.

It belongs to the cyclin family. Cyclin C subfamily. In terms of assembly, component of the Mediator complex.

It is found in the nucleus. In terms of biological role, component of the Mediator complex, a coactivator involved in regulated gene transcription of nearly all RNA polymerase II-dependent genes. Mediator functions as a bridge to convey information from gene-specific regulatory proteins to the basal RNA polymerase II transcription machinery. Mediator is recruited to promoters by direct interactions with regulatory proteins and serves as a scaffold for the assembly of a functional preinitiation complex with RNA polymerase II and the general transcription factors. Binds to and activates cyclin-dependent kinase cdk-8 that phosphorylates the CTD (C-terminal domain) of the large subunit of RNA polymerase II (RNAp II), which may inhibit the formation of a transcription initiation complex. The polypeptide is Cyclin-C (cic-1) (Caenorhabditis briggsae).